The chain runs to 138 residues: Basic phospholipase A2 Sct-N6 (138 aa).

Residues 1-16 (MRTFWIVAVLLVGVEG) form the signal peptide. 7 disulfides stabilise this stretch: cysteine 42/cysteine 131, cysteine 44/cysteine 60, cysteine 59/cysteine 111, cysteine 65/cysteine 138, cysteine 66/cysteine 104, cysteine 73/cysteine 97, and cysteine 91/cysteine 102. Residues tyrosine 43, glycine 45, and glycine 47 each coordinate Ca(2+). Histidine 63 is a catalytic residue. Ca(2+) is bound at residue aspartate 64. Aspartate 105 is an active-site residue.

This sequence belongs to the phospholipase A2 family. Group II subfamily. D49 sub-subfamily. The cofactor is Ca(2+). As to expression, expressed by the venom gland.

It is found in the secreted. The enzyme catalyses a 1,2-diacyl-sn-glycero-3-phosphocholine + H2O = a 1-acyl-sn-glycero-3-phosphocholine + a fatty acid + H(+). Functionally, snake venom phospholipase A2 (PLA2) that displays edema-inducing activities, as well as presynaptic neurotoxicity and low myotoxicity. PLA2 catalyzes the calcium-dependent hydrolysis of the 2-acyl groups in 3-sn-phosphoglycerides. In Sistrurus tergeminus (Western massasauga), this protein is Basic phospholipase A2 Sct-N6.